Reading from the N-terminus, the 629-residue chain is tRNA uridine 5-carboxymethylaminomethyl modification enzyme MnmG (629 aa).

Residues 13 to 18, Val-125, and Ser-180 each bind FAD; that span reads GGGHAG. An NAD(+)-binding site is contributed by 273-287; it reads GPRYCPSIEDKVMRF. Position 370 (Gln-370) interacts with FAD.

The protein belongs to the MnmG family. In terms of assembly, homodimer. Heterotetramer of two MnmE and two MnmG subunits. The cofactor is FAD.

Its subcellular location is the cytoplasm. In terms of biological role, NAD-binding protein involved in the addition of a carboxymethylaminomethyl (cmnm) group at the wobble position (U34) of certain tRNAs, forming tRNA-cmnm(5)s(2)U34. This is tRNA uridine 5-carboxymethylaminomethyl modification enzyme MnmG from Aliivibrio fischeri (strain ATCC 700601 / ES114) (Vibrio fischeri).